Reading from the N-terminus, the 227-residue chain is Enolase-phosphatase E1 (227 aa).

Residues aspartate 11 and glutamate 13 each coordinate Mg(2+). Substrate contacts are provided by residues 118 to 119 and lysine 161; that span reads SS. Aspartate 186 contributes to the Mg(2+) binding site.

The protein belongs to the HAD-like hydrolase superfamily. MasA/MtnC family. Monomer. The cofactor is Mg(2+).

Its subcellular location is the cytoplasm. The protein localises to the nucleus. The enzyme catalyses 5-methylsulfanyl-2,3-dioxopentyl phosphate + H2O = 1,2-dihydroxy-5-(methylsulfanyl)pent-1-en-3-one + phosphate. Its pathway is amino-acid biosynthesis; L-methionine biosynthesis via salvage pathway; L-methionine from S-methyl-5-thio-alpha-D-ribose 1-phosphate: step 3/6. It participates in amino-acid biosynthesis; L-methionine biosynthesis via salvage pathway; L-methionine from S-methyl-5-thio-alpha-D-ribose 1-phosphate: step 4/6. Functionally, bifunctional enzyme that catalyzes the enolization of 2,3-diketo-5-methylthiopentyl-1-phosphate (DK-MTP-1-P) into the intermediate 2-hydroxy-3-keto-5-methylthiopentenyl-1-phosphate (HK-MTPenyl-1-P), which is then dephosphorylated to form the acireductone 1,2-dihydroxy-3-keto-5-methylthiopentene (DHK-MTPene). The chain is Enolase-phosphatase E1 from Saccharomyces cerevisiae (strain JAY291) (Baker's yeast).